Reading from the N-terminus, the 522-residue chain is Zinc finger protein 329 (522 aa).

Phosphoserine is present on serine 30. C2H2-type zinc fingers lie at residues 184-206, 212-234, 240-262, 268-290, 296-318, 324-346, 352-374, 380-402, 408-430, 436-458, 464-486, and 492-514; these read YKCAECGKCFKRNSSLVLHHRTH, YTCNDCGKSFSKNYNLIVHRRIH, YKCSKCGKAFSDGSALTQHQRIH, YACLDCGKTFNRNSSLILHQRTH, YRCNECGKPFTDISHLTVHLRIH, YECSRCGKAFRDGSYLTQHERTH, FECVECGKSFSRNSHLIVHQKIH, YECKECGKTFIESAYLIRHQRVH, YGCNQCRKLFRNIAGLIRHQRIH, YECNQCGKAFRDSSCLTKHQRIH, YQCLKCGKSFRQNTHLVVHQRLH, and SQCPHCGKIFRRSWCLARHQRTH.

This sequence belongs to the krueppel C2H2-type zinc-finger protein family.

It is found in the nucleus. May be involved in transcriptional regulation. The sequence is that of Zinc finger protein 329 (Znf329) from Mus musculus (Mouse).